The primary structure comprises 307 residues: Nicotinamide/nicotinic acid mononucleotide adenylyltransferase 2 (307 aa).

NAD(+)-binding residues include Ser-16 and Phe-17. His-24 provides a ligand contact to ATP. Positions 92 and 95 each coordinate NAD(+). S-palmitoyl cysteine attachment occurs at residues Cys-164 and Cys-165. NAD(+)-binding residues include Gly-200, Asp-202, Leu-212, Trp-213, and Arg-232. 271–274 (TKSR) is an ATP binding site.

Belongs to the eukaryotic NMN adenylyltransferase family. Monomer. It depends on Mg(2+) as a cofactor. In terms of processing, degraded in response to injured neurite. Degradation is caused by polyubiquitination by MYCBP2 after recognition by FBXO45. Palmitoylated; palmitoylation is required for membrane association.

It localises to the golgi apparatus membrane. Its subcellular location is the cytoplasmic vesicle membrane. It is found in the cytoplasm. The protein localises to the cell projection. The protein resides in the axon. It catalyses the reaction beta-nicotinamide D-ribonucleotide + ATP + H(+) = diphosphate + NAD(+). It carries out the reaction nicotinate beta-D-ribonucleotide + ATP + H(+) = deamido-NAD(+) + diphosphate. It participates in cofactor biosynthesis; NAD(+) biosynthesis; NAD(+) from nicotinamide D-ribonucleotide: step 1/1. Its pathway is cofactor biosynthesis; NAD(+) biosynthesis; deamido-NAD(+) from nicotinate D-ribonucleotide: step 1/1. Its activity is regulated as follows. Inhibited by P1-(adenosine-5')-P3-(nicotinamide-riboside-5')-triphosphate (Np3AD) and P1-(adenosine-5')-P4-(nicotinamide-riboside-5')-tetraphosphate (Np4AD). Nicotinamide/nicotinate-nucleotide adenylyltransferase that acts as an axon maintenance factor. Axon survival factor required for the maintenance of healthy axons: acts by delaying Wallerian axon degeneration, an evolutionarily conserved process that drives the loss of damaged axons. Catalyzes the formation of NAD(+) from nicotinamide mononucleotide (NMN) and ATP. Can also use the deamidated form; nicotinic acid mononucleotide (NaMN) as substrate but with a lower efficiency. Cannot use triazofurin monophosphate (TrMP) as substrate. Also catalyzes the reverse reaction, i.e. the pyrophosphorolytic cleavage of NAD(+). For the pyrophosphorolytic activity prefers NAD(+), NADH and NaAD as substrates and degrades nicotinic acid adenine dinucleotide phosphate (NHD) less effectively. Fails to cleave phosphorylated dinucleotides NADP(+), NADPH and NaADP(+). Also acts as an activator of ADP-ribosylation by supporting the catalytic activity of PARP16 and promoting mono-ADP-ribosylation of ribosomes by PARP16. May be involved in the maintenance of axonal integrity. The protein is Nicotinamide/nicotinic acid mononucleotide adenylyltransferase 2 (NMNAT2) of Pongo abelii (Sumatran orangutan).